Here is a 501-residue protein sequence, read N- to C-terminus: Probable cytosol aminopeptidase (501 aa).

Residues lysine 267 and aspartate 272 each contribute to the Mn(2+) site. Lysine 279 is a catalytic residue. Mn(2+) is bound by residues aspartate 290, aspartate 349, and glutamate 351. Residue arginine 353 is part of the active site.

This sequence belongs to the peptidase M17 family. It depends on Mn(2+) as a cofactor.

The protein resides in the cytoplasm. The catalysed reaction is Release of an N-terminal amino acid, Xaa-|-Yaa-, in which Xaa is preferably Leu, but may be other amino acids including Pro although not Arg or Lys, and Yaa may be Pro. Amino acid amides and methyl esters are also readily hydrolyzed, but rates on arylamides are exceedingly low.. The enzyme catalyses Release of an N-terminal amino acid, preferentially leucine, but not glutamic or aspartic acids.. In terms of biological role, presumably involved in the processing and regular turnover of intracellular proteins. Catalyzes the removal of unsubstituted N-terminal amino acids from various peptides. The polypeptide is Probable cytosol aminopeptidase (Hamiltonella defensa subsp. Acyrthosiphon pisum (strain 5AT)).